Here is a 262-residue protein sequence, read N- to C-terminus: Expansin-A7 (262 aa).

Residues 1–30 form the signal peptide; that stretch reads MGPISSSWSFNKFFSIVFVVFAISGEFVAG. Residues 55-167 enclose the Expansin-like EG45 domain; it reads GGACGYGNLF…RRVPCQRSGG (113 aa). 3 disulfide bridges follow: Cys58–Cys86, Cys89–Cys162, and Cys94–Cys100. Residues 177–257 enclose the Expansin-like CBD domain; that stretch reads YWLLIFVMNV…NWSGGKTYKS (81 aa).

The protein belongs to the expansin family. Expansin A subfamily.

Its subcellular location is the secreted. It is found in the cell wall. It localises to the membrane. Causes loosening and extension of plant cell walls by disrupting non-covalent bonding between cellulose microfibrils and matrix glucans. No enzymatic activity has been found. The chain is Expansin-A7 (EXPA7) from Arabidopsis thaliana (Mouse-ear cress).